The following is a 279-amino-acid chain: Putative pyruvate, phosphate dikinase regulatory protein (279 aa).

Gly-153–Thr-160 provides a ligand contact to ADP.

It belongs to the pyruvate, phosphate/water dikinase regulatory protein family. PDRP subfamily.

It catalyses the reaction N(tele)-phospho-L-histidyl/L-threonyl-[pyruvate, phosphate dikinase] + ADP = N(tele)-phospho-L-histidyl/O-phospho-L-threonyl-[pyruvate, phosphate dikinase] + AMP + H(+). It carries out the reaction N(tele)-phospho-L-histidyl/O-phospho-L-threonyl-[pyruvate, phosphate dikinase] + phosphate + H(+) = N(tele)-phospho-L-histidyl/L-threonyl-[pyruvate, phosphate dikinase] + diphosphate. Functionally, bifunctional serine/threonine kinase and phosphorylase involved in the regulation of the pyruvate, phosphate dikinase (PPDK) by catalyzing its phosphorylation/dephosphorylation. The sequence is that of Putative pyruvate, phosphate dikinase regulatory protein from Brucella abortus (strain 2308).